Reading from the N-terminus, the 194-residue chain is Ion-translocating oxidoreductase complex subunit A (194 aa).

The next 6 membrane-spanning stretches (helical) occupy residues 1–21, 48–68, 73–93, 103–123, 135–155, and 172–192; these read MVMH…FILV, CVIV…LIPF, LCTM…EIIV, LLGI…IPLM, VLYG…FSSI, and PIAL…DGLI.

The protein belongs to the NqrDE/RnfAE family. As to quaternary structure, the complex is composed of six subunits: RnfA, RnfB, RnfC, RnfD, RnfE and RnfG.

The protein resides in the cell inner membrane. Part of a membrane-bound complex that couples electron transfer with translocation of ions across the membrane. The protein is Ion-translocating oxidoreductase complex subunit A of Buchnera aphidicola subsp. Baizongia pistaciae (strain Bp).